The following is a 289-amino-acid chain: Protoheme IX farnesyltransferase (289 aa).

Helical transmembrane passes span 13 to 33 (LIKP…LYLA), 40 to 60 (VFLI…SFIF), 85 to 105 (ISIP…FYML), 111 to 131 (LLTA…YTIF), 139 to 159 (NIVI…AAIG), 168 to 188 (ILFT…AIFL), 212 to 232 (SIFF…FLEP), 234 to 254 (MGLL…ILSY), and 269 to 289 (FLFS…DHMI).

It belongs to the UbiA prenyltransferase family. Protoheme IX farnesyltransferase subfamily.

The protein resides in the cell inner membrane. It carries out the reaction heme b + (2E,6E)-farnesyl diphosphate + H2O = Fe(II)-heme o + diphosphate. It participates in porphyrin-containing compound metabolism; heme O biosynthesis; heme O from protoheme: step 1/1. Its function is as follows. Converts heme B (protoheme IX) to heme O by substitution of the vinyl group on carbon 2 of heme B porphyrin ring with a hydroxyethyl farnesyl side group. This chain is Protoheme IX farnesyltransferase, found in Leptospira borgpetersenii serovar Hardjo-bovis (strain JB197).